We begin with the raw amino-acid sequence, 508 residues long: Sugar transport protein 12 (508 aa).

Residues 1 to 22 are Cytoplasmic-facing; that stretch reads MPSVGIVIGDGKKEYPGKLTLY. A run of 12 helical transmembrane segments spans residues 23–43, 80–100, 118–138, 141–161, 172–192, 201–221, 294–314, 317–337, 347–367, 383–403, 426–446, and 451–471; these read VTVT…DIGI, VSLT…SLVA, VLFC…MLIV, LLLG…LSEM, IGFQ…NFFF, LSLG…LILP, LTGI…IGFG, AALI…VVSI, FLFL…AAAI, WYAI…AWSW, ITVS…LMML, and FGLF…VYLF. Topologically, residues 472-508 are cytoplasmic; it reads LPETRGVPIEEMNRVWRSHWYWSKFVDAEKNLTKVVI.

Belongs to the major facilitator superfamily. Sugar transporter (TC 2.A.1.1) family.

It localises to the membrane. Mediates an active uptake of hexoses, probably by sugar/hydrogen symport. This is Sugar transport protein 12 (STP12) from Arabidopsis thaliana (Mouse-ear cress).